A 779-amino-acid chain; its full sequence is Guanyl-specific ribonuclease pgl-1 (779 aa).

Residues 203 to 464 (KLLLEGVKEQ…KRIIDALEKS (262 aa)) are involved in dimerization. The active-site Proton acceptor is the histidine 453. Disordered stretches follow at residues 563-596 (HEPQTATLVPPSPNEESMAAESISTDGWDSPTKS), 611-661 (RDAL…GDAT), and 718-779 (GRGG…GGNF). Residues 584 to 595 (SISTDGWDSPTK) are compositionally biased toward polar residues. Basic and acidic residues predominate over residues 612-626 (DALKPDSVNSHRSEE). Residues 699–772 (GGGGGSYGGR…GGDRGGRGGY (74 aa)) are RNA-binding RGG-box.

As to quaternary structure, homodimer. Interacts with pgl-2 and pgl-3; this association is not required for P-granule localization of either pgl-2 or pgl-3. Interacts with ife-1. Interacts with prmt-1; the interaction is direct. Interacts with nmad-1. Interacts with P granule components meg-1, meg-3 and meg-4. Does not require metal ions for catalytic activity. is required as a cofactor.

The protein localises to the cytoplasmic granule. The enzyme catalyses [RNA] containing guanosine + H2O = an [RNA fragment]-3'-guanosine-3'-phosphate + a 5'-hydroxy-ribonucleotide-3'-[RNA fragment].. Functionally, guanyl-specific endoribonuclease which cleaves the phosphodiester bond in single-stranded RNA between the 3'-guanylic residue and the 5'-OH residue of adjacent nucleotide, resulting in the formation of a corresponding 2',3'-cyclic phosphate intermediate. Essential role in male and female postembryonic germline development; maternally provided protein maintains a population of proliferating germ cells and zygotic expression is required for correct oogenesis. Together with the P-granule component pgl-3, is involved in the formation of P-granules. Together with pgl-3, probably recruits other granule components such as pos-1, mex-3 and glh-1 to P-granules. In addition, may act redundantly with pgl-3 to protect germ cells from excessive germline apoptosis during normal oogenesis and development of the two gonadal arms. This may in part be through regulating the localization of sir-2.1 which is involved in germ cell apoptosis. May protect somatic cells from excessive apoptosis during normal development. This Caenorhabditis remanei (Caenorhabditis vulgaris) protein is Guanyl-specific ribonuclease pgl-1.